Consider the following 518-residue polypeptide: Nuclear receptor ROR-gamma (518 aa).

Residues Met1–Pro30 are modulating. 2 consecutive NR C4-type zinc fingers follow at residues Cys31–Cys51 and Cys67–Cys91. The nuclear receptor DNA-binding region spans Cys31–Met96. 2 disordered regions span residues Arg105–Gly183 and His238–Ser258. Basic and acidic residues predominate over residues Lys109–Val118. Residues Gln119–Gln130 are compositionally biased toward low complexity. The region spanning Glu269–Thr508 is the NR LBD domain. An AF-2 motif is present at residues Leu501–Phe506.

The protein belongs to the nuclear hormone receptor family. NR1 subfamily. Interacts (via AF-2 motif) with the coactivator NCOA2 (via LXXLL motif). Interacts with the corepressor NCOR1. Interacts with CRY1. Interacts (via AF-2 motif) with the coactivators NCOA1 and PPARGC1A (via LXXLL motif). Interacts (via AF-2 motif) with PROX1. Interacts with FOXP3. Interacts with NR0B2. Isoform 1 is widely expressed in many tissues, including liver and adipose, and highly expressed in skeletal muscle. Isoform 2 is primarily expressed in immature thymocytes.

The protein resides in the nucleus. Its function is as follows. Nuclear receptor that binds DNA as a monomer to ROR response elements (RORE) containing a single core motif half-site 5'-AGGTCA-3' preceded by a short A-T-rich sequence. Key regulator of cellular differentiation, immunity, peripheral circadian rhythm as well as lipid, steroid, xenobiotics and glucose metabolism. Considered to have intrinsic transcriptional activity, have some natural ligands like oxysterols that act as agonists (25-hydroxycholesterol) or inverse agonists (7-oxygenated sterols), enhancing or repressing the transcriptional activity, respectively. Recruits distinct combinations of cofactors to target gene regulatory regions to modulate their transcriptional expression, depending on the tissue, time and promoter contexts. Regulates the circadian expression of clock genes such as CRY1, BMAL1 and NR1D1 in peripheral tissues and in a tissue-selective manner. Competes with NR1D1 for binding to their shared DNA response element on some clock genes such as BMAL1, CRY1 and NR1D1 itself, resulting in NR1D1-mediated repression or RORC-mediated activation of the expression, leading to the circadian pattern of clock genes expression. Therefore influences the period length and stability of the clock. Involved in the regulation of the rhythmic expression of genes involved in glucose and lipid metabolism, including PLIN2 and AVPR1A. Negative regulator of adipocyte differentiation through the regulation of early phase genes expression, such as MMP3. Controls adipogenesis as well as adipocyte size and modulates insulin sensitivity in obesity. In liver, has specific and redundant functions with RORA as positive or negative modulator of expression of genes encoding phase I and Phase II proteins involved in the metabolism of lipids, steroids and xenobiotics, such as SULT1E1. Also plays a role in the regulation of hepatocyte glucose metabolism through the regulation of G6PC1 and PCK1. Regulates the rhythmic expression of PROX1 and promotes its nuclear localization. Plays an indispensable role in the induction of IFN-gamma dependent anti-mycobacterial systemic immunity. Functionally, essential for thymopoiesis and the development of several secondary lymphoid tissues, including lymph nodes and Peyer's patches. Required for the generation of LTi (lymphoid tissue inducer) cells. Regulates thymocyte survival through DNA-binding on ROREs of target gene promoter regions and recruitment of coactivaros via the AF-2. Also plays a key role, downstream of IL6 and TGFB and synergistically with RORA, for lineage specification of uncommitted CD4(+) T-helper (T(H)) cells into T(H)17 cells, antagonizing the T(H)1 program. Probably regulates IL17 and IL17F expression on T(H) by binding to the essential enhancer conserved non-coding sequence 2 (CNS2) in the IL17-IL17F locus. May also play a role in the pre-TCR activation cascade leading to the maturation of alpha/beta T-cells and may participate in the regulation of DNA accessibility in the TCR-J(alpha) locus. The sequence is that of Nuclear receptor ROR-gamma (RORC) from Homo sapiens (Human).